The chain runs to 884 residues: Lon protease homolog 2, peroxisomal (884 aa).

The region spanning 12–255 (LAILPFRNKV…KATELVDRHL (244 aa)) is the Lon N-terminal domain. The tract at residues 67-101 (SLLSPGVGSDSGEGGSKAPGGSAGESTKQDTKNGK) is disordered. Gly residues predominate over residues 75–89 (SDSGEGGSKAPGGSA). 408 to 415 (GPPGVGKT) serves as a coordination point for ATP. One can recognise a Lon proteolytic domain in the interval 689–874 (VASPGVSVGL…EEVLDHAFEG (186 aa)). Catalysis depends on residues S780 and K823. The short motif at 882-884 (SKL) is the Microbody targeting signal element.

This sequence belongs to the peptidase S16 family. Expressed in roots, leaves and panicles.

The protein localises to the peroxisome matrix. The catalysed reaction is Hydrolysis of proteins in presence of ATP.. In terms of biological role, ATP-dependent serine protease that mediates the selective degradation of misfolded and unassembled polypeptides in the peroxisomal matrix. Necessary for type 2 peroxisome targeting signal (PTS2)-containing protein processing and facilitates peroxisome matrix protein import. This chain is Lon protease homolog 2, peroxisomal (LON1), found in Oryza sativa subsp. indica (Rice).